The primary structure comprises 434 residues: Trigger factor 2 (434 aa).

One can recognise a PPIase FKBP-type domain in the interval 164-247; that stretch reads GDTVTVDYDC…VKKVERIEIL (84 aa).

This sequence belongs to the FKBP-type PPIase family. Tig subfamily.

The protein localises to the cytoplasm. It catalyses the reaction [protein]-peptidylproline (omega=180) = [protein]-peptidylproline (omega=0). In terms of biological role, involved in protein export. Acts as a chaperone by maintaining the newly synthesized protein in an open conformation. Functions as a peptidyl-prolyl cis-trans isomerase. This Desulfitobacterium hafniense (strain Y51) protein is Trigger factor 2.